We begin with the raw amino-acid sequence, 1430 residues long: ABC transporter eupT (1430 aa).

Positions 1 to 26 are disordered; sequence MAPAIDSTVNDLQPNTPNPEKALSSQ. The 257-residue stretch at 112–368 folds into the ABC transporter 1 domain; sequence LALPAMIRQL…FVNLGFECPA (257 aa). Asn292 is a glycosylation site (N-linked (GlcNAc...) asparagine). A run of 5 helical transmembrane segments spans residues 476–496, 511–531, 557–577, 586–606, and 620–640; these read WPAVWVMVGNTIMALIMSSLF, VVLFMAILFNAFSSILEVMTL, VLVDMPMKITSTISFNLVFYF, GNFFFYLLVVFLIVLAMSGVF, and MVPASVLMLALLIFTGFVVPV. An N-linked (GlcNAc...) asparagine glycan is attached at Asn684. Residues 707–727 traverse the membrane as a helical segment; sequence VGIIIAMVIFNYLMYFIASEY. In terms of domain architecture, ABC transporter 2 spans 789-1032; the sequence is FHWNNVCYDL…TLIDYFERNG (244 aa). 825–832 contributes to the ATP binding site; the sequence is GVSGAGKT. Residue Asn1019 is glycosylated (N-linked (GlcNAc...) asparagine). Helical transmembrane passes span 1133-1153, 1213-1233, 1249-1269, 1278-1298, 1305-1325, and 1400-1420; these read ITLCIATSLFIGLVFFNAPLS, LPWSTLASVFMWALFYYPIGF, LMWLLFWQFLVWVSTFTHMCI, GGNIANFLFVLAFFFCGVLAS, FWIFLYRASPLSYWVSAVLST, and FGILWVYIGFNIAAALALYWI.

This sequence belongs to the ABC transporter superfamily. ABCG family. PDR (TC 3.A.1.205) subfamily.

The protein resides in the cell membrane. Functionally, ABC transporter; part of the gene cluster that mediates the biosynthesis of eupenifeldin, a bistropolone meroterpenoid that acts as an antitumor agent. This is ABC transporter eupT from Phoma sp.